Reading from the N-terminus, the 162-residue chain is Nucleotide-binding protein CHU_2278 (162 aa).

The protein belongs to the YajQ family.

In terms of biological role, nucleotide-binding protein. In Cytophaga hutchinsonii (strain ATCC 33406 / DSM 1761 / CIP 103989 / NBRC 15051 / NCIMB 9469 / D465), this protein is Nucleotide-binding protein CHU_2278.